A 244-amino-acid polypeptide reads, in one-letter code: Glutathione S-transferase theta-2B (244 aa).

A GST N-terminal domain is found at 2 to 82; the sequence is GLELFLDLVS…YLSCKYQTPD (81 aa). Residues 40–41, 53–54, 66–67, and 104–107 contribute to the glutathione site; these read HK, KL, ES, and DCIR. The GST C-terminal domain occupies 88 to 224; that stretch reads DLQARARVHE…SILEQAAKKT (137 aa).

The protein belongs to the GST superfamily. Theta family. Homodimer. As to expression, expressed at low levels in liver. In lung, expressed at low levels in ciliated bronchiolar cells, alveolar macrophages and alveolar type II cells.

Its subcellular location is the cytoplasm. The protein resides in the cytosol. The catalysed reaction is RX + glutathione = an S-substituted glutathione + a halide anion + H(+). Its function is as follows. Conjugation of reduced glutathione to a wide number of exogenous and endogenous hydrophobic electrophiles. Has a sulfatase activity. This Homo sapiens (Human) protein is Glutathione S-transferase theta-2B (GSTT2B).